The sequence spans 522 residues: Target of rapamycin complex 2 subunit MAPKAP1 (522 aa).

An interaction with MAP3K2 region spans residues 2–184; it reads GFLDNPTIIL…KKIDVYLPLH (183 aa). The segment at 2–267 is interaction with NBN; the sequence is GFLDNPTIIL…GFSTLALVEK (266 aa). Thr-86 is modified (phosphothreonine). 4 positions are modified to phosphoserine: Ser-128, Ser-186, Ser-315, and Ser-356. Residues 139-267 enclose the CRIM domain; sequence QSILSVRLEQ…GFSTLALVEK (129 aa). The tract at residues 279–353 is SIN1-type RBD; that stretch reads LFVRINAAHG…QSAWEFCLVR (75 aa). The SIN1-type PH domain maps to 382 to 487; that stretch reads HYKSFKVSMI…IVLKVNYILE (106 aa). Arg-393 serves as a coordination point for a 1,2-diacyl-sn-glycero-3-phospho-(1D-myo-inositol-3,4,5-trisphosphate). At Thr-398 the chain carries Phosphothreonine. Residues Lys-428 and Lys-464 each coordinate a 1,2-diacyl-sn-glycero-3-phospho-(1D-myo-inositol-3,4,5-trisphosphate). Residues 468–522 form an interaction with ATF2 region; it reads FESDAATVNEIVLKVNYILESRASTARADYFAQKQRKLNRRTSFSFQKEKKSGQQ. Ser-510 carries the phosphoserine modification.

This sequence belongs to the SIN1 family. Component of the mechanistic target of rapamycin complex 2 (mTORC2), consisting in two heterotretramers composed of MTOR, MLST8, RICTOR and MAPKAP1/SIN1. The mTORC2 core complex associates with PRR5/PROTOR1 and/or PRR5L/PROTOR2. Contrary to mTORC1, mTORC2 does not bind to and is not sensitive to FKBP12-rapamycin. Interacts with MAP3K2. Interacts with ATF2. Interacts with MAPK8. Interacts with GTP-bound HRAS and KRAS; inhibiting their activity. Interacts with IFNAR2. Phosphorylation at Ser-128 by PKC promotes relocalization to the perinuclear region, where the mTORC2 complex specifically mediates phosphorylation of SGK1. Phosphorylated at Thr-86 by AKT1 or RPS6KB1 in the presence of growth factors; the effect of this phosphorylation is however unclear. According to two studies, phosphorylation at Thr-86 by AKT1 is part of a positive feedback loop that increases mTORC2 activation. According to another study, phosphorylation at Thr-86 and Thr-398 by RPS6KB1 promotes dissociation from the mTORC2 complex, leading to inhibit mTORC2 signaling. As to expression, present in the lumenal epithelium and glandular epithelium of endometrium (at protein level).

It is found in the cell membrane. Its subcellular location is the cytoplasmic vesicle. It localises to the endoplasmic reticulum membrane. The protein resides in the early endosome membrane. The protein localises to the late endosome membrane. It is found in the lysosome membrane. Its subcellular location is the golgi apparatus membrane. It localises to the mitochondrion outer membrane. The protein resides in the cytoplasm. The protein localises to the perinuclear region. It is found in the nucleus. Phosphatidylinositol 3,4,5-trisphosphate (PI(3,4,5)P3) promotes MTOR activation by relieving MAPKAP1/SIN1-mediated inhibition of MTOR that takes place in absence of PI(3,4,5)P3. Its function is as follows. Component of the mechanistic target of rapamycin complex 2 (mTORC2), which transduces signals from growth factors to pathways involved in proliferation, cytoskeletal organization, lipogenesis and anabolic output. In response to growth factors, mTORC2 phosphorylates and activates AGC protein kinase family members, including AKT (AKT1, AKT2 and AKT3), PKC (PRKCA, PRKCB and PRKCE) and SGK1. In contrast to mTORC1, mTORC2 is nutrient-insensitive. Within the mTORC2 complex, MAPKAP1/SIN1 acts as a substrate adapter which recognizes and binds AGC protein kinase family members for phosphorylation by MTOR. mTORC2 plays a critical role in AKT1 activation by mediating phosphorylation of different sites depending on the context, such as 'Thr-450', 'Ser-473', 'Ser-477' or 'Thr-479', facilitating the phosphorylation of the activation loop of AKT1 on 'Thr-308' by PDPK1/PDK1 which is a prerequisite for full activation. mTORC2 catalyzes the phosphorylation of SGK1 at 'Ser-422' and of PRKCA on 'Ser-657'. The mTORC2 complex also phosphorylates various proteins involved in insulin signaling, such as FBXW8 and IGF2BP1. mTORC2 acts upstream of Rho GTPases to regulate the actin cytoskeleton, probably by activating one or more Rho-type guanine nucleotide exchange factors. mTORC2 promotes the serum-induced formation of stress-fibers or F-actin. MAPKAP1 inhibits MAP3K2 by preventing its dimerization and autophosphorylation. Inhibits HRAS and KRAS independently of mTORC2 complex. Enhances osmotic stress-induced phosphorylation of ATF2 and ATF2-mediated transcription. Involved in ciliogenesis, regulates cilia length through its interaction with CCDC28B independently of mTORC2 complex. This Ovis aries (Sheep) protein is Target of rapamycin complex 2 subunit MAPKAP1 (MAPKAP1).